A 79-amino-acid chain; its full sequence is Protein B6 (79 aa).

The sequence is that of Protein B6 (B6) from Human herpesvirus 6B (strain Z29) (HHV-6 variant B).